Reading from the N-terminus, the 247-residue chain is Fibroblast growth factor 14 (247 aa).

2 disordered regions span residues 1-37 and 216-247; these read MAAA…SKNR and ETVP…CKTT. A compositionally biased stretch (basic and acidic residues) spans 15-25; sequence QAREQHWDRPS.

This sequence belongs to the heparin-binding growth factors family. Interacts with SCN8A. In terms of tissue distribution, brain and testis; widely distributed in the developing nervous system. In adult, high levels in the granular layer of the cerebellum, less in hippocampus and olfactory bulb.

It is found in the nucleus. Its function is as follows. Probably involved in nervous system development and function. The protein is Fibroblast growth factor 14 (Fgf14) of Mus musculus (Mouse).